The following is a 589-amino-acid chain: Protein FAM161B (589 aa).

Disordered regions lie at residues 1 to 166 (MTVG…VCSW), 265 to 297 (KKEQ…RKIP), and 386 to 444 (AERR…GLAS). Residues 92–106 (PDSDLNDAEDEEDLE) show a composition bias toward acidic residues. A compositionally biased stretch (polar residues) spans 151 to 166 (TSDSGPPSQHRSVCSW). The segment covering 265-275 (KKEQQKEDAPQ) has biased composition (basic and acidic residues). Positions 287-297 (SPKKATSRKIP) are enriched in basic residues. Positions 386–396 (AERRETRETTR) are enriched in basic and acidic residues. Residues 510–577 (EEVFKAKLKE…ALKQAGLEEE (68 aa)) are a coiled coil.

It belongs to the FAM161 family. In terms of assembly, interacts with FAM161A.

The sequence is that of Protein FAM161B (Fam161b) from Mus musculus (Mouse).